A 563-amino-acid chain; its full sequence is Arginine--tRNA ligase (563 aa).

The 'HIGH' region motif lies at 120–130 (PNIAKPFHIGH).

The protein belongs to the class-I aminoacyl-tRNA synthetase family. As to quaternary structure, monomer.

It is found in the cytoplasm. It carries out the reaction tRNA(Arg) + L-arginine + ATP = L-arginyl-tRNA(Arg) + AMP + diphosphate. The sequence is that of Arginine--tRNA ligase from Clostridium botulinum (strain Langeland / NCTC 10281 / Type F).